A 270-amino-acid chain; its full sequence is UPF0354 protein BCA_4815 (270 aa).

It belongs to the UPF0354 family.

The chain is UPF0354 protein BCA_4815 from Bacillus cereus (strain 03BB102).